The chain runs to 247 residues: PF03932 family protein CutC (247 aa).

Belongs to the CutC family.

It is found in the cytoplasm. This Klebsiella pneumoniae (strain 342) protein is PF03932 family protein CutC.